The chain runs to 151 residues: Ribosome maturation factor RimP (151 aa).

The protein belongs to the RimP family.

Its subcellular location is the cytoplasm. Its function is as follows. Required for maturation of 30S ribosomal subunits. This Caldanaerobacter subterraneus subsp. tengcongensis (strain DSM 15242 / JCM 11007 / NBRC 100824 / MB4) (Thermoanaerobacter tengcongensis) protein is Ribosome maturation factor RimP.